Here is a 126-residue protein sequence, read N- to C-terminus: Probable 4-amino-4-deoxy-L-arabinose-phosphoundecaprenol flippase subunit ArnF (126 aa).

Over Met1–Tyr4 the chain is Cytoplasmic. A helical transmembrane segment spans residues Ile5 to Val25. At Val26–Ser49 the chain is on the periplasmic side. Residues Leu50–Thr70 traverse the membrane as a helical segment. At Leu71–Ala79 the chain is on the cytoplasmic side. Residues Tyr80 to Phe100 form a helical membrane-spanning segment. Topologically, residues Asn101–Glu102 are periplasmic. Residues Thr103–Ser123 traverse the membrane as a helical segment. Residues Arg124 to Glu126 are Cytoplasmic-facing.

It belongs to the ArnF family. Heterodimer of ArnE and ArnF.

It is found in the cell inner membrane. The protein operates within bacterial outer membrane biogenesis; lipopolysaccharide biosynthesis. Translocates 4-amino-4-deoxy-L-arabinose-phosphoundecaprenol (alpha-L-Ara4N-phosphoundecaprenol) from the cytoplasmic to the periplasmic side of the inner membrane. The sequence is that of Probable 4-amino-4-deoxy-L-arabinose-phosphoundecaprenol flippase subunit ArnF from Photorhabdus laumondii subsp. laumondii (strain DSM 15139 / CIP 105565 / TT01) (Photorhabdus luminescens subsp. laumondii).